The sequence spans 141 residues: Putative pre-16S rRNA nuclease (141 aa).

It belongs to the YqgF nuclease family.

It localises to the cytoplasm. Could be a nuclease involved in processing of the 5'-end of pre-16S rRNA. This is Putative pre-16S rRNA nuclease from Coxiella burnetii (strain CbuG_Q212) (Coxiella burnetii (strain Q212)).